Reading from the N-terminus, the 265-residue chain is Leucine-rich repeat-containing protein Bf66946 (265 aa).

The first 20 residues, 1 to 20, serve as a signal peptide directing secretion; sequence MALRDIFLLSMAMTAVTVQA. Cystine bridges form between Cys-21-Cys-27 and Cys-25-Cys-39. The 30-residue stretch at 21 to 50 folds into the LRRNT domain; that stretch reads CPSACKCTVSLYGEMVVACGGMGLTEIPED. LRR repeat units lie at residues 51 to 75, 76 to 99, and 100 to 123; these read IPHR…SFKG, LRNL…ALRH, and LGHL…LFDF. Asn-64 is a glycosylation site (N-linked (GlcNAc...) asparagine). The LRRCT domain occupies 142 to 193; the sequence is NPWGCDCRMAWLAQELAGGSKTFGDRHMECATPAALAGRGLSEIPQTSFVCT. Cystine bridges form between Cys-146–Cys-171 and Cys-148–Cys-192. A helical membrane pass occupies residues 220–240; the sequence is VAVVFGCITGLVTILLLVLTA.

The protein resides in the cell membrane. Its function is as follows. Binds selectively to the Gram-positive bacteria S.aureus and S.pneumoniae. Does not adhere to the Gram-negative bacteria E.coli and S.enterica. Probably recognizes peptidoglycans expressed on the bacterial cell surface. The sequence is that of Leucine-rich repeat-containing protein Bf66946 from Branchiostoma floridae (Florida lancelet).